Here is a 114-residue protein sequence, read N- to C-terminus: Non-specific lipid-transfer protein 1 (114 aa).

Positions M1 to E23 are cleaved as a signal peptide. Intrachain disulfides connect C27-C73, C37-C50, C51-C96, and C71-C110.

Belongs to the plant LTP family.

Its function is as follows. Plant non-specific lipid-transfer proteins transfer phospholipids as well as galactolipids across membranes. May play a role in wax or cutin deposition in the cell walls of expanding epidermal cells and certain secretory tissues. The chain is Non-specific lipid-transfer protein 1 (TSW12) from Solanum lycopersicum (Tomato).